The chain runs to 432 residues: D-amino acid dehydrogenase (432 aa).

3 to 17 is an FAD binding site; the sequence is VVVLGSGVVGVTSAW.

Belongs to the DadA oxidoreductase family. The cofactor is FAD.

It catalyses the reaction a D-alpha-amino acid + A + H2O = a 2-oxocarboxylate + AH2 + NH4(+). Its pathway is amino-acid degradation; D-alanine degradation; NH(3) and pyruvate from D-alanine: step 1/1. Functionally, oxidative deamination of D-amino acids. The protein is D-amino acid dehydrogenase of Enterobacter sp. (strain 638).